The following is a 117-amino-acid chain: Photosystem II reaction center Psb28 protein (117 aa).

Belongs to the Psb28 family. In terms of assembly, part of the photosystem II complex.

The protein localises to the cellular thylakoid membrane. The chain is Photosystem II reaction center Psb28 protein from Prochlorococcus marinus (strain MIT 9215).